The chain runs to 91 residues: CRISPR-associated endoribonuclease Cas2 (91 aa).

Asp14 serves as a coordination point for Mg(2+).

This sequence belongs to the CRISPR-associated endoribonuclease Cas2 protein family. In terms of assembly, homodimer, forms a heterotetramer with a Cas1 homodimer. It depends on Mg(2+) as a cofactor.

In terms of biological role, CRISPR (clustered regularly interspaced short palindromic repeat), is an adaptive immune system that provides protection against mobile genetic elements (viruses, transposable elements and conjugative plasmids). CRISPR clusters contain sequences complementary to antecedent mobile elements and target invading nucleic acids. CRISPR clusters are transcribed and processed into CRISPR RNA (crRNA). Functions as a ssRNA-specific endoribonuclease. Involved in the integration of spacer DNA into the CRISPR cassette. This is CRISPR-associated endoribonuclease Cas2 from Nanoarchaeum equitans (strain Kin4-M).